Here is a 45-residue protein sequence, read N- to C-terminus: Major cold shock protein (45 aa).

Residues 1–45 enclose the CSD domain; that stretch reads EKGFGFISTENGQDVFAHFSAIQTNGFKTLEEGQKVEFDVEEGQR.

Homodimer.

It is found in the cytoplasm. The chain is Major cold shock protein (cspA) from Streptococcus dysgalactiae.